We begin with the raw amino-acid sequence, 493 residues long: Polyamine aminopropyltransferase 2 (493 aa).

Helical transmembrane passes span 9-29 (LCIF…ATLA), 32-52 (LLGN…LSMG), 68-88 (LAFV…VPIA), 101-121 (VIYG…PLAV), 137-157 (VLEK…YLFL), 161-181 (GLPL…FLLV), and 188-208 (KFLK…AVGH). The interval 187–448 (KKFLKFLAIF…PLNFENFELK (262 aa)) is spermidine synthase. The 236-residue stretch at 202–437 (ATYAVGHKRI…GEWGMVIGSK (236 aa)) folds into the PABS domain. Glutamine 233 is a binding site for S-methyl-5'-thioadenosine. 2 residues coordinate spermidine: histidine 263 and aspartate 287. S-methyl-5'-thioadenosine is bound by residues aspartate 306 and 340-341 (DA). The active-site Proton acceptor is aspartate 358.

The protein belongs to the spermidine/spermine synthase family. In terms of assembly, homodimer or homotetramer.

The protein localises to the cell membrane. It carries out the reaction S-adenosyl 3-(methylsulfanyl)propylamine + putrescine = S-methyl-5'-thioadenosine + spermidine + H(+). It participates in amine and polyamine biosynthesis; spermidine biosynthesis; spermidine from putrescine: step 1/1. Functionally, catalyzes the irreversible transfer of a propylamine group from the amino donor S-adenosylmethioninamine (decarboxy-AdoMet) to putrescine (1,4-diaminobutane) to yield spermidine. The polypeptide is Polyamine aminopropyltransferase 2 (Aquifex aeolicus (strain VF5)).